A 98-amino-acid polypeptide reads, in one-letter code: Small ribosomal subunit protein uS19 (98 aa).

The disordered stretch occupies residues 77–98; it reads TRTYRGHAGGKAEKGGAAPKRK.

The protein belongs to the universal ribosomal protein uS19 family.

Protein S19 forms a complex with S13 that binds strongly to the 16S ribosomal RNA. The sequence is that of Small ribosomal subunit protein uS19 from Chlorobium phaeovibrioides (strain DSM 265 / 1930) (Prosthecochloris vibrioformis (strain DSM 265)).